A 687-amino-acid polypeptide reads, in one-letter code: Polyphosphate kinase (687 aa).

Asparagine 45 serves as a coordination point for ATP. Residues arginine 373 and arginine 403 each contribute to the Mg(2+) site. Histidine 433 acts as the Phosphohistidine intermediate in catalysis. Residues tyrosine 466, arginine 562, and histidine 590 each contribute to the ATP site. The PLD phosphodiesterase domain occupies aspartate 585–asparagine 615.

It belongs to the polyphosphate kinase 1 (PPK1) family. It depends on Mg(2+) as a cofactor. In terms of processing, an intermediate of this reaction is the autophosphorylated ppk in which a phosphate is covalently linked to a histidine residue through a N-P bond.

It catalyses the reaction [phosphate](n) + ATP = [phosphate](n+1) + ADP. Its function is as follows. Catalyzes the reversible transfer of the terminal phosphate of ATP to form a long-chain polyphosphate (polyP). The sequence is that of Polyphosphate kinase from Yersinia pestis.